Here is a 528-residue protein sequence, read N- to C-terminus: D-3-phosphoglycerate dehydrogenase (528 aa).

NAD(+) contacts are provided by residues 151-152 (RI), aspartate 171, 230-232 (AAR), and aspartate 256. The active site involves arginine 232. Residue glutamate 261 is part of the active site. Histidine 279 (proton donor) is an active-site residue. 279–282 (HLGA) contacts NAD(+). In terms of domain architecture, ACT spans 455-527 (NLIIHYVDRP…DAYKLEVVDL (73 aa)).

This sequence belongs to the D-isomer specific 2-hydroxyacid dehydrogenase family.

The catalysed reaction is (2R)-3-phosphoglycerate + NAD(+) = 3-phosphooxypyruvate + NADH + H(+). The enzyme catalyses (R)-2-hydroxyglutarate + NAD(+) = 2-oxoglutarate + NADH + H(+). Its pathway is amino-acid biosynthesis; L-serine biosynthesis; L-serine from 3-phospho-D-glycerate: step 1/3. Catalyzes the reversible oxidation of 3-phospho-D-glycerate to 3-phosphonooxypyruvate, the first step of the phosphorylated L-serine biosynthesis pathway. Also catalyzes the reversible oxidation of 2-hydroxyglutarate to 2-oxoglutarate. This chain is D-3-phosphoglycerate dehydrogenase (serA), found in Mycobacterium bovis (strain ATCC BAA-935 / AF2122/97).